Consider the following 73-residue polypeptide: Small ribosomal subunit protein eS27 (73 aa).

Zn(2+) is bound by residues Cys-28, Cys-31, Cys-47, and Cys-50. A C4-type zinc finger spans residues 28–50; it reads CPKCGNRQVVFSHSTFRARCLNC.

Belongs to the eukaryotic ribosomal protein eS27 family. As to quaternary structure, part of the 30S ribosomal subunit. It depends on Zn(2+) as a cofactor.

In Aeropyrum pernix (strain ATCC 700893 / DSM 11879 / JCM 9820 / NBRC 100138 / K1), this protein is Small ribosomal subunit protein eS27.